Here is a 275-residue protein sequence, read N- to C-terminus: Large ribosomal subunit protein uL2 (275 aa).

The segment at 218 to 275 (RPQTRGSAMNPIDHPHGGGEGKTNSGRHPVSPWGMPTKGYKTRKKKASDKLIISKRKK) is disordered. Residues 257–275 (YKTRKKKASDKLIISKRKK) show a composition bias toward basic residues.

It belongs to the universal ribosomal protein uL2 family. Part of the 50S ribosomal subunit. Forms a bridge to the 30S subunit in the 70S ribosome.

One of the primary rRNA binding proteins. Required for association of the 30S and 50S subunits to form the 70S ribosome, for tRNA binding and peptide bond formation. It has been suggested to have peptidyltransferase activity; this is somewhat controversial. Makes several contacts with the 16S rRNA in the 70S ribosome. The protein is Large ribosomal subunit protein uL2 of Sulfurovum sp. (strain NBC37-1).